Consider the following 138-residue polypeptide: Basic phospholipase A2 homolog CTs-K49a (138 aa).

The signal sequence occupies residues 1 to 16 (MRTLWIMAVLLVVVEG). 6 cysteine pairs are disulfide-bonded: cysteine 42/cysteine 131, cysteine 44/cysteine 60, cysteine 59/cysteine 111, cysteine 65/cysteine 138, cysteine 66/cysteine 104, and cysteine 91/cysteine 102. An important for membrane-damaging activities in eukaryotes and bacteria; heparin-binding region spans residues 121–133 (KKKKINLKLFCKK).

Belongs to the phospholipase A2 family. Group II subfamily. K49 sub-subfamily. As to expression, expressed by the venom gland.

The protein resides in the secreted. Snake venom phospholipase A2 homolog that lacks catalytic activity. It shows myotoxic and weak anticoagulant activities. A model of myotoxic mechanism has been proposed: an apo Lys49-PLA2 is activated by the entrance of a hydrophobic molecule (e.g. fatty acid) at the hydrophobic channel of the protein leading to a reorientation of a monomer. This reorientation causes a transition between 'inactive' to 'active' states, causing alignment of C-terminal and membrane-docking sites (MDoS) side-by-side and putting the membrane-disruption sites (MDiS) in the same plane, exposed to solvent and in a symmetric position for both monomers. The MDoS region stabilizes the toxin on membrane by the interaction of charged residues with phospholipid head groups. Subsequently, the MDiS region destabilizes the membrane with penetration of hydrophobic residues. This insertion causes a disorganization of the membrane, allowing an uncontrolled influx of ions (i.e. calcium and sodium), and eventually triggering irreversible intracellular alterations and cell death. This chain is Basic phospholipase A2 homolog CTs-K49a, found in Trimeresurus stejnegeri (Chinese green tree viper).